The following is a 443-amino-acid chain: Glutamyl-tRNA reductase (443 aa).

Substrate contacts are provided by residues 49–52 (TCNR), Ser-109, 114–116 (EQQ), and Gln-120. Cys-50 serves as the catalytic Nucleophile. An NADP(+)-binding site is contributed by 189–194 (GAGSMG).

It belongs to the glutamyl-tRNA reductase family. As to quaternary structure, homodimer.

It catalyses the reaction (S)-4-amino-5-oxopentanoate + tRNA(Glu) + NADP(+) = L-glutamyl-tRNA(Glu) + NADPH + H(+). The protein operates within porphyrin-containing compound metabolism; protoporphyrin-IX biosynthesis; 5-aminolevulinate from L-glutamyl-tRNA(Glu): step 1/2. Functionally, catalyzes the NADPH-dependent reduction of glutamyl-tRNA(Glu) to glutamate 1-semialdehyde (GSA). In Mycobacteroides abscessus (strain ATCC 19977 / DSM 44196 / CCUG 20993 / CIP 104536 / JCM 13569 / NCTC 13031 / TMC 1543 / L948) (Mycobacterium abscessus), this protein is Glutamyl-tRNA reductase.